We begin with the raw amino-acid sequence, 278 residues long: Ribosomal RNA small subunit methyltransferase A (278 aa).

The S-adenosyl-L-methionine site is built by asparagine 18, leucine 20, glycine 45, glutamate 66, aspartate 89, and asparagine 110.

It belongs to the class I-like SAM-binding methyltransferase superfamily. rRNA adenine N(6)-methyltransferase family. RsmA subfamily.

Its subcellular location is the cytoplasm. The catalysed reaction is adenosine(1518)/adenosine(1519) in 16S rRNA + 4 S-adenosyl-L-methionine = N(6)-dimethyladenosine(1518)/N(6)-dimethyladenosine(1519) in 16S rRNA + 4 S-adenosyl-L-homocysteine + 4 H(+). Specifically dimethylates two adjacent adenosines (A1518 and A1519) in the loop of a conserved hairpin near the 3'-end of 16S rRNA in the 30S particle. May play a critical role in biogenesis of 30S subunits. This chain is Ribosomal RNA small subunit methyltransferase A, found in Cupriavidus metallidurans (strain ATCC 43123 / DSM 2839 / NBRC 102507 / CH34) (Ralstonia metallidurans).